The primary structure comprises 404 residues: MQYSEIMIRYGELSTKGKNRMRFINKLRNNISDVLSIYTQVKVTADRDRAHAYLNGADYTAVAESLKQVFGIQNFSPVYKVEKSVEVLKSSVQEIMRDIYKEGMTFKISSKRSDHNFELDSRELNQTLGGAVFEAIPNVQVQMKSPDINLQVEIREEAAYLSYETIRGAGGLPVGTSGKGMLMLSGGIDSPVAGYLALKRGVDIEAVHFASPPYTSPGALKKAQDLTRKLTKFGGNIQFIEVPFTEIQEEIKAKAPEAYLMTLTRRFMMRITDRIREVRNGLVIINGESLGQVASQTLESMKAINAVTNTPIIRPVVTMDKLEIIDIAQEIDTFDISIQPFEDCCTIFAPDRPKTNPKIKNAEQYEARMDVEGLVERAVAGIMITEITPQAEKDEVDDLIDNLL.

A THUMP domain is found at 60-165 (TAVAESLKQV…EEAAYLSYET (106 aa)). Residues 183–184 (ML), 208–209 (HF), R265, G287, and Q296 each bind ATP.

The protein belongs to the ThiI family.

The protein resides in the cytoplasm. It catalyses the reaction [ThiI sulfur-carrier protein]-S-sulfanyl-L-cysteine + a uridine in tRNA + 2 reduced [2Fe-2S]-[ferredoxin] + ATP + H(+) = [ThiI sulfur-carrier protein]-L-cysteine + a 4-thiouridine in tRNA + 2 oxidized [2Fe-2S]-[ferredoxin] + AMP + diphosphate. It carries out the reaction [ThiS sulfur-carrier protein]-C-terminal Gly-Gly-AMP + S-sulfanyl-L-cysteinyl-[cysteine desulfurase] + AH2 = [ThiS sulfur-carrier protein]-C-terminal-Gly-aminoethanethioate + L-cysteinyl-[cysteine desulfurase] + A + AMP + 2 H(+). The protein operates within cofactor biosynthesis; thiamine diphosphate biosynthesis. Functionally, catalyzes the ATP-dependent transfer of a sulfur to tRNA to produce 4-thiouridine in position 8 of tRNAs, which functions as a near-UV photosensor. Also catalyzes the transfer of sulfur to the sulfur carrier protein ThiS, forming ThiS-thiocarboxylate. This is a step in the synthesis of thiazole, in the thiamine biosynthesis pathway. The sulfur is donated as persulfide by IscS. The protein is Probable tRNA sulfurtransferase of Streptococcus pneumoniae serotype 19F (strain G54).